The chain runs to 629 residues: MDFDSVLSIASQNQGLSSLPKRYSLKTGPPKKDLKVGGVNSAAVQAFLKKKAVEQKNKEQQDKKAKEDLLAKRVELKSDRKARAMASRTKDNFRGYNGIPVIDQPKKRQSKGSSTEEQQSSTKYEGGDYDDEDNFDYEGTDSESEPSRPVKPQAISRPEYSNRVENKPKKLSAPARPASSSMNFADLLKLAEKKQFEPVELKVVKKTEERLRTAEEIRELEMERRVKKLDKGKDVRSDKNSGQKDSRSQTSSNPQKKHVDRDGKNGRFPRPSEEKHQSSSTSKKPKLQASSERTPTSAKLHGDRSNSGSSGALNSKSAMKNGASFQAKQAPPRPSQGQRPATPSDLTPRKGNVSLTQAKSSISGSCPPGAARPGQGPHKNSAHGRPSNFSTSGPSQKPANPGKLSRPGSNAPPRPGGSGVVRPFTGDPSKQPRPGGNLQSQQFPGSSRASLNGPKRMERGVSGSQINRMSSGPGRSQCTVVSETISTKNITPRPGMVQRPPGPQGPRTVIGPSGHRILVKPSGPALPPITSSYKRKFEDEEEYDSEMDDFIDDEGEDQDEISKHIREIFGYDKNKYKDESDYALKFMESSWKEQQKEEARSLRMAVLEDEEEERRELEEMQRKNAKKRK.

Residues 1 to 522 (MDFDSVLSIA…SGHRILVKPS (522 aa)) are important for interaction with DNA. A coiled-coil region spans residues 45 to 72 (QAFLKKKAVEQKNKEQQDKKAKEDLLAK). Over residues 53 to 93 (VEQKNKEQQDKKAKEDLLAKRVELKSDRKARAMASRTKDNF) the composition is skewed to basic and acidic residues. Disordered regions lie at residues 53–181 (VEQK…ASSS), 206–533 (KTEE…TSSY), and 608–629 (EDEE…KKRK). The segment covering 111 to 123 (KGSSTEEQQSSTK) has biased composition (polar residues). The segment covering 127 to 144 (GDYDDEDNFDYEGTDSES) has biased composition (acidic residues). Residues 203–228 (VVKKTEERLRTAEEIRELEMERRVKK) are a coiled coil. Composition is skewed to basic and acidic residues over residues 206–247 (KTEE…KDSR) and 257–277 (KHVD…EKHQ). Polar residues-rich tracts occupy residues 278 to 297 (SSST…TPTS), 305 to 327 (SNSG…SFQA), 335 to 345 (SQGQRPATPSD), 353 to 364 (VSLTQAKSSISG), 387 to 398 (SNFSTSGPSQKP), 437 to 450 (NLQS…SRAS), and 462 to 490 (SGSQ…TKNI). Residues 523 to 629 (GPALPPITSS…MQRKNAKKRK (107 aa)) form an important for interaction with histones region. Residues 591–629 (WKEQQKEEARSLRMAVLEDEEEERRELEEMQRKNAKKRK) adopt a coiled-coil conformation.

This sequence belongs to the SPT2 family. Interacts with histones. Interacts with a heterotetrameric complex formed by histone H3 and H4, especially when the histone tetramer is not bound to DNA.

The protein localises to the nucleus. It is found in the nucleolus. Its function is as follows. Histone chaperone that stabilizes pre-existing histone tetramers and regulates replication-independent histone exchange on chromatin. Required for normal chromatin refolding in the coding region of transcribed genes, and for the suppression of spurious transcription. Binds DNA and histones and promotes nucleosome assembly (in vitro). Facilitates formation of tetrameric histone complexes containing histone H3 and H4. Modulates RNA polymerase 1-mediated transcription. Binds DNA, with a preference for branched DNA species, such as Y-form DNA and Holliday junction DNA. This is Protein SPT2 homolog (spty2d1) from Danio rerio (Zebrafish).